A 142-amino-acid polypeptide reads, in one-letter code: Large ribosomal subunit protein bL17 (142 aa).

This sequence belongs to the bacterial ribosomal protein bL17 family. Part of the 50S ribosomal subunit. Contacts protein L32.

The protein is Large ribosomal subunit protein bL17 of Chlamydia abortus (strain DSM 27085 / S26/3) (Chlamydophila abortus).